The primary structure comprises 201 residues: Pyrrolidone-carboxylate peptidase (201 aa).

Catalysis depends on residues Glu78, Cys141, and His165.

The protein belongs to the peptidase C15 family. As to quaternary structure, homotetramer.

It is found in the cytoplasm. It carries out the reaction Release of an N-terminal pyroglutamyl group from a polypeptide, the second amino acid generally not being Pro.. Its function is as follows. Removes 5-oxoproline from various penultimate amino acid residues except L-proline. The sequence is that of Pyrrolidone-carboxylate peptidase from Brachyspira hyodysenteriae (strain ATCC 49526 / WA1).